The following is a 494-amino-acid chain: UPF0371 protein SpyM3_1021 (494 aa).

This sequence belongs to the UPF0371 family.

In Streptococcus pyogenes serotype M3 (strain ATCC BAA-595 / MGAS315), this protein is UPF0371 protein SpyM3_1021.